A 316-amino-acid polypeptide reads, in one-letter code: tRNA(Ile)-lysidine synthase (316 aa).

33-38 (SGGTDS) is a binding site for ATP.

Belongs to the tRNA(Ile)-lysidine synthase family.

It localises to the cytoplasm. The catalysed reaction is cytidine(34) in tRNA(Ile2) + L-lysine + ATP = lysidine(34) in tRNA(Ile2) + AMP + diphosphate + H(+). In terms of biological role, ligates lysine onto the cytidine present at position 34 of the AUA codon-specific tRNA(Ile) that contains the anticodon CAU, in an ATP-dependent manner. Cytidine is converted to lysidine, thus changing the amino acid specificity of the tRNA from methionine to isoleucine. The chain is tRNA(Ile)-lysidine synthase from Bdellovibrio bacteriovorus (strain ATCC 15356 / DSM 50701 / NCIMB 9529 / HD100).